A 221-amino-acid chain; its full sequence is Probable endo-1,4-beta-xylanase B (221 aa).

A signal peptide spans 1 to 19 (MVSFSSLALALSTVVGVLA). Positions 33 to 221 (QLTHSQTGTK…SSGSATMTVS (189 aa)) constitute a GH11 domain. The active-site Nucleophile is Glu-117. Catalysis depends on Glu-208, which acts as the Proton donor.

It belongs to the glycosyl hydrolase 11 (cellulase G) family.

The protein localises to the secreted. It carries out the reaction Endohydrolysis of (1-&gt;4)-beta-D-xylosidic linkages in xylans.. The protein operates within glycan degradation; xylan degradation. In terms of biological role, endo-1,4-beta-xylanase involved in the hydrolysis of xylan, a major structural heterogeneous polysaccharide found in plant biomass representing the second most abundant polysaccharide in the biosphere, after cellulose. This chain is Probable endo-1,4-beta-xylanase B (xlnB), found in Aspergillus clavatus (strain ATCC 1007 / CBS 513.65 / DSM 816 / NCTC 3887 / NRRL 1 / QM 1276 / 107).